Consider the following 144-residue polypeptide: Cytochrome c oxidase subunit 4 isoform 1, mitochondrial (144 aa).

The Mitochondrial matrix segment spans residues 1–73 (SVVKSEDYAL…SFAEMNRGSN (73 aa)). Lysine 4 is modified (N6-acetyllysine; alternate). At lysine 4 the chain carries N6-succinyllysine; alternate. Serine 31 and serine 33 each carry phosphoserine. Lysine 35 bears the N6-acetyllysine; alternate mark. Lysine 35 carries the N6-succinyllysine; alternate modification. Residue lysine 42 is modified to N6-acetyllysine. Residues 74–99 (EWKTVVGAAMFFIGFTAILIILEKRY) traverse the membrane as a helical segment. Topologically, residues 100-144 (VYGPLPHTFDKEWVAMQTKRMLDLKVNPVDGLASKWDYDKKEWKK) are mitochondrial intermembrane.

Belongs to the cytochrome c oxidase IV family. As to quaternary structure, component of the cytochrome c oxidase (complex IV, CIV), a multisubunit enzyme composed of 14 subunits. The complex is composed of a catalytic core of 3 subunits MT-CO1, MT-CO2 and MT-CO3, encoded in the mitochondrial DNA, and 11 supernumerary subunits COX4I, COX5A, COX5B, COX6A, COX6B, COX6C, COX7A, COX7B, COX7C, COX8 and NDUFA4, which are encoded in the nuclear genome. The complex exists as a monomer or a dimer and forms supercomplexes (SCs) in the inner mitochondrial membrane with NADH-ubiquinone oxidoreductase (complex I, CI) and ubiquinol-cytochrome c oxidoreductase (cytochrome b-c1 complex, complex III, CIII), resulting in different assemblies (supercomplex SCI(1)III(2)IV(1) and megacomplex MCI(2)III(2)IV(2)). Interacts with PHB2; the interaction decreases in absence of SPHK2. Interacts with AFG1L. Interacts with ABCB7; this interaction allows the regulation of cellular iron homeostasis and cellular reactive oxygen species (ROS) levels in cardiomyocytes. Interacts with FLVCR2; this interaction occurs in the absence of heme and is disrupted upon heme binding. Interacts with IRGC.

It localises to the mitochondrion inner membrane. It functions in the pathway energy metabolism; oxidative phosphorylation. Functionally, component of the cytochrome c oxidase, the last enzyme in the mitochondrial electron transport chain which drives oxidative phosphorylation. The respiratory chain contains 3 multisubunit complexes succinate dehydrogenase (complex II, CII), ubiquinol-cytochrome c oxidoreductase (cytochrome b-c1 complex, complex III, CIII) and cytochrome c oxidase (complex IV, CIV), that cooperate to transfer electrons derived from NADH and succinate to molecular oxygen, creating an electrochemical gradient over the inner membrane that drives transmembrane transport and the ATP synthase. Cytochrome c oxidase is the component of the respiratory chain that catalyzes the reduction of oxygen to water. Electrons originating from reduced cytochrome c in the intermembrane space (IMS) are transferred via the dinuclear copper A center (CU(A)) of subunit 2 and heme A of subunit 1 to the active site in subunit 1, a binuclear center (BNC) formed by heme A3 and copper B (CU(B)). The BNC reduces molecular oxygen to 2 water molecules using 4 electrons from cytochrome c in the IMS and 4 protons from the mitochondrial matrix. The polypeptide is Cytochrome c oxidase subunit 4 isoform 1, mitochondrial (COX4I1) (Aotus azarae (Azara's night monkey)).